Here is a 932-residue protein sequence, read N- to C-terminus: 2-oxoglutarate dehydrogenase E1 component (932 aa).

Belongs to the alpha-ketoglutarate dehydrogenase family. In terms of assembly, homodimer. Part of the 2-oxoglutarate dehydrogenase (OGDH) complex composed of E1 (2-oxoglutarate dehydrogenase), E2 (dihydrolipoamide succinyltransferase) and E3 (dihydrolipoamide dehydrogenase); the complex contains multiple copies of the three enzymatic components (E1, E2 and E3). The cofactor is thiamine diphosphate.

It carries out the reaction N(6)-[(R)-lipoyl]-L-lysyl-[protein] + 2-oxoglutarate + H(+) = N(6)-[(R)-S(8)-succinyldihydrolipoyl]-L-lysyl-[protein] + CO2. Its function is as follows. E1 component of the 2-oxoglutarate dehydrogenase (OGDH) complex which catalyzes the decarboxylation of 2-oxoglutarate, the first step in the conversion of 2-oxoglutarate to succinyl-CoA and CO(2). The sequence is that of 2-oxoglutarate dehydrogenase E1 component from Staphylococcus aureus (strain MRSA252).